Reading from the N-terminus, the 342-residue chain is L-threonine 3-dehydrogenase (342 aa).

Cys-38 provides a ligand contact to Zn(2+). Residues Thr-40 and His-43 each act as charge relay system in the active site. Positions 63, 64, 93, 96, 99, and 107 each coordinate Zn(2+). NAD(+) is bound by residues Val-175, Asp-195, Arg-200, 262–264 (LGI), and 286–287 (IY).

It belongs to the zinc-containing alcohol dehydrogenase family. Homotetramer. Zn(2+) is required as a cofactor.

It is found in the cytoplasm. It carries out the reaction L-threonine + NAD(+) = (2S)-2-amino-3-oxobutanoate + NADH + H(+). It participates in amino-acid degradation; L-threonine degradation via oxydo-reductase pathway; glycine from L-threonine: step 1/2. Catalyzes the NAD(+)-dependent oxidation of L-threonine to 2-amino-3-ketobutyrate. The protein is L-threonine 3-dehydrogenase of Coxiella burnetii (strain Dugway 5J108-111).